We begin with the raw amino-acid sequence, 732 residues long: Catalase-peroxidase (732 aa).

Positions 97 to 220 (WHSAGTYRTS…LAAVQMGLIY (124 aa)) form a cross-link, tryptophyl-tyrosyl-methioninium (Trp-Tyr) (with M-246). The Proton acceptor role is filled by H98. Residues 220–246 (YVNPEGPDGNPDPVAAGRDIRETFARM) constitute a cross-link (tryptophyl-tyrosyl-methioninium (Tyr-Met) (with W-97)). H261 provides a ligand contact to heme b.

Belongs to the peroxidase family. Peroxidase/catalase subfamily. In terms of assembly, homodimer or homotetramer. It depends on heme b as a cofactor. In terms of processing, formation of the three residue Trp-Tyr-Met cross-link is important for the catalase, but not the peroxidase activity of the enzyme.

The catalysed reaction is H2O2 + AH2 = A + 2 H2O. The enzyme catalyses 2 H2O2 = O2 + 2 H2O. Functionally, bifunctional enzyme with both catalase and broad-spectrum peroxidase activity. This is Catalase-peroxidase from Chlorobium phaeobacteroides (strain DSM 266 / SMG 266 / 2430).